The chain runs to 368 residues: Probable dual-specificity RNA methyltransferase RlmN (368 aa).

Residue glutamate 109 is the Proton acceptor of the active site. A Radical SAM core domain is found at 115–355; the sequence is YPDRVTMCIS…VTVRDTRGQE (241 aa). Cysteine 122 and cysteine 360 are disulfide-bonded. Positions 129, 133, and 136 each coordinate [4Fe-4S] cluster. S-adenosyl-L-methionine contacts are provided by residues 184–185, serine 218, 241–243, and asparagine 317; these read GE and SLH. Residue cysteine 360 is the S-methylcysteine intermediate of the active site.

The protein belongs to the radical SAM superfamily. RlmN family. The cofactor is [4Fe-4S] cluster.

The protein resides in the cytoplasm. It carries out the reaction adenosine(2503) in 23S rRNA + 2 reduced [2Fe-2S]-[ferredoxin] + 2 S-adenosyl-L-methionine = 2-methyladenosine(2503) in 23S rRNA + 5'-deoxyadenosine + L-methionine + 2 oxidized [2Fe-2S]-[ferredoxin] + S-adenosyl-L-homocysteine. It catalyses the reaction adenosine(37) in tRNA + 2 reduced [2Fe-2S]-[ferredoxin] + 2 S-adenosyl-L-methionine = 2-methyladenosine(37) in tRNA + 5'-deoxyadenosine + L-methionine + 2 oxidized [2Fe-2S]-[ferredoxin] + S-adenosyl-L-homocysteine. Its function is as follows. Specifically methylates position 2 of adenine 2503 in 23S rRNA and position 2 of adenine 37 in tRNAs. The polypeptide is Probable dual-specificity RNA methyltransferase RlmN (Streptomyces griseus subsp. griseus (strain JCM 4626 / CBS 651.72 / NBRC 13350 / KCC S-0626 / ISP 5235)).